The chain runs to 398 residues: Acetate kinase (398 aa).

A Mg(2+)-binding site is contributed by N8. K15 contacts ATP. Residue R89 participates in substrate binding. Residue D146 is the Proton donor/acceptor of the active site. Residues 206–210 (HIGNG), 283–285 (DMR), and 331–335 (GMGEN) each bind ATP. E383 provides a ligand contact to Mg(2+).

The protein belongs to the acetokinase family. Homodimer. It depends on Mg(2+) as a cofactor. Mn(2+) is required as a cofactor.

Its subcellular location is the cytoplasm. The catalysed reaction is acetate + ATP = acetyl phosphate + ADP. It participates in metabolic intermediate biosynthesis; acetyl-CoA biosynthesis; acetyl-CoA from acetate: step 1/2. Its function is as follows. Catalyzes the formation of acetyl phosphate from acetate and ATP. Can also catalyze the reverse reaction. This Streptococcus pyogenes serotype M4 (strain MGAS10750) protein is Acetate kinase.